The sequence spans 248 residues: MLYLHDVWVNWFEGEENGYNVCHFYEWRKDDTIELLDQVPLLKVDATLYHYIENELLELPQQLLEDVHHKAYIRKNHERLQQEYCFVVTDGRGIIAVDTIGYNVPIRKSRLIPRQEQMVYEMVENVQAEKYKFQMEETEKEHHILSPSPHIMNGLTRKERQLKQLLFMALDQLHTTKNPAEIRYWYTEWDPSAYGAVQHMEFEDVWKQLYEEAKNGWSEKHEQLCERLVKGQPFFEKLWEMENEQKVN.

The protein belongs to the UPF0736 family.

The chain is UPF0736 protein Bcer98_0893 from Bacillus cytotoxicus (strain DSM 22905 / CIP 110041 / 391-98 / NVH 391-98).